Here is a 175-residue protein sequence, read N- to C-terminus: COMPASS component SDC1 (175 aa).

Polar residues predominate over residues 1-12; that stretch reads MNESENSPQHNE. A disordered region spans residues 1–45; sequence MNESENSPQHNEVTVPMVEDTSSNADIPMEQIQREDNKNYDKHDN. Over residues 32 to 45 the composition is skewed to basic and acidic residues; that stretch reads IQREDNKNYDKHDN. The segment at 121-162 is DPY-30; it reads QTRKYLNTNVTPHLLAGMRLIAVQQPEDPLRVLGEYLIEQSN.

It belongs to the dpy-30 family. As to quaternary structure, component of the Set1C/COMPASS complex which consists of SET1(2), BRE2(2), SPP1(2), SDC1(1), SHG1(1), SWD1(1), SWD2(1), and SWD3(1). Interacts directly with BRE2.

The protein resides in the nucleus. Functionally, component of the Set1C/COMPASS complex that specifically mono-, di- and trimethylates histone H3 to form H3K4me1/2/3, which subsequently plays a role in telomere length maintenance and transcription elongation regulation. COMPASS recognizes ubiquitinated H2B on one face of the nucleosome which stimulates the methylation of H3 on the opposing face. This is COMPASS component SDC1 from Saccharomyces cerevisiae (strain ATCC 204508 / S288c) (Baker's yeast).